Reading from the N-terminus, the 238-residue chain is Type III secretion protein hrcQa (238 aa).

Positions 66–238 are hrcQa-C; sequence DAEALLSLLG…SHEEHRHHEY (173 aa).

Interacts with hrcQb.

The protein resides in the cell inner membrane. In terms of biological role, component of the type III secretion system, which is required for effector protein delivery, parasitism, and pathogenicity. Probably participates in the formation of a C-ring-like assembly along with hrcQb. This chain is Type III secretion protein hrcQa (hrcQa), found in Pseudomonas savastanoi pv. phaseolicola (Pseudomonas syringae pv. phaseolicola).